Consider the following 283-residue polypeptide: N-terminal Xaa-Pro-Lys N-methyltransferase 2 (283 aa).

S-adenosyl-L-methionine is bound by residues Gly124, Arg129, Asp146, 174–175 (LQ), and Gln190.

It belongs to the methyltransferase superfamily. NTM1 family.

The protein resides in the nucleus. The catalysed reaction is N-terminal L-alanyl-L-prolyl-L-lysyl-[protein] + S-adenosyl-L-methionine = N-terminal N-methyl-L-alanyl-L-prolyl-L-lysyl-[protein] + S-adenosyl-L-homocysteine + H(+). The enzyme catalyses N-terminal L-prolyl-L-prolyl-L-lysyl-[protein] + S-adenosyl-L-methionine = N-terminal N-methyl-L-prolyl-L-prolyl-L-lysyl-[protein] + S-adenosyl-L-homocysteine + H(+). It carries out the reaction N-terminal L-seryl-L-prolyl-L-lysyl-[protein] + S-adenosyl-L-methionine = N-terminal N-methyl-L-seryl-L-prolyl-L-lysyl-[protein] + S-adenosyl-L-homocysteine + H(+). In terms of biological role, alpha N-methyltransferase that methylates the N-terminus of target proteins containing the N-terminal motif [Ala/Pro/Ser]-Pro-Lys when the initiator Met is cleaved. Specifically catalyzes monomethylation of exposed alpha-amino group of Ala or Ser residue in the [Ala/Ser]-Pro-Lys motif and Pro in the Pro-Pro-Lys motif. Predominantly functions as a mono-methyltransferase but is also able to di-/tri-methylate the GPKRIA peptide and di-methylate the PPKRIA peptide (in vitro). May activate NTMT1 by priming its substrates for trimethylation. The sequence is that of N-terminal Xaa-Pro-Lys N-methyltransferase 2 (Ntmt2) from Rattus norvegicus (Rat).